A 786-amino-acid polypeptide reads, in one-letter code: LPS-assembly protein LptD (786 aa).

The first 39 residues, Met1 to Ala39, serve as a signal peptide directing secretion.

This sequence belongs to the LptD family. Component of the lipopolysaccharide transport and assembly complex. Interacts with LptE and LptA.

Its subcellular location is the cell outer membrane. Functionally, together with LptE, is involved in the assembly of lipopolysaccharide (LPS) at the surface of the outer membrane. The sequence is that of LPS-assembly protein LptD from Burkholderia ambifaria (strain ATCC BAA-244 / DSM 16087 / CCUG 44356 / LMG 19182 / AMMD) (Burkholderia cepacia (strain AMMD)).